The primary structure comprises 704 residues: Tryptophan synthase (704 aa).

The interval 1–292 (MEAIKKVFEQ…QLTPNAETAK (292 aa)) is tryptophan synthase alpha chain. Catalysis depends on proton acceptor residues Glu49 and Asp60. Residues 293–704 (GVENILPARF…HVSSNAIPSK (412 aa)) form a tryptophan synthase beta chain region. Lys380 carries the N6-(pyridoxal phosphate)lysine modification.

In the N-terminal section; belongs to the TrpA family. This sequence in the C-terminal section; belongs to the TrpB family. Pyridoxal 5'-phosphate is required as a cofactor.

The enzyme catalyses (1S,2R)-1-C-(indol-3-yl)glycerol 3-phosphate + L-serine = D-glyceraldehyde 3-phosphate + L-tryptophan + H2O. The protein operates within amino-acid biosynthesis; L-tryptophan biosynthesis; L-tryptophan from chorismate: step 5/5. This is Tryptophan synthase (TRP-1) from Coprinopsis cinerea (strain Okayama-7 / 130 / ATCC MYA-4618 / FGSC 9003) (Inky cap fungus).